The sequence spans 52 residues: Thiocillin (52 aa).

Positions 1–38 (MSEIKKALNTLEIEDFDAIEMVDVDAMPENEALEIMGA) are excised as a propeptide. The thiazole-4-carboxylic acid (Ser-Cys) cross-link spans 39–40 (SC). Residues 39–47 (SCTTCVCTC) constitute a cross-link (pyridine-2,5-dicarboxylic acid (Ser-Cys) (with S-48)). A cross-link (pyridine-2,5-dicarboxylic acid (Ser-Ser) (with C-47)) is located at residues 39-48 (SCTTCVCTCS). At Thr-42 the chain carries (Z)-2,3-didehydrobutyrine. Residues 42–43 (TC) constitute a cross-link (thiazole-4-carboxylic acid (Thr-Cys)). Residue Val-44 is modified to 3-hydroxyvaline (Val); partial. A cross-link (thiazole-4-carboxylic acid (Val-Cys)) is located at residues 44-45 (VC). Thr-46 is modified (O-methylthreonine; partial). The segment at residues 46 to 47 (TC) is a cross-link (thiazole-4-carboxylic acid (Thr-Cys)). Residues 48 to 49 (SC) constitute a cross-link (thiazole-4-carboxylic acid (Ser-Cys)). Residues 49–50 (CC) constitute a cross-link (thiazole-4-carboxylic acid (Cys-Cys)). The residue at position 51 (Thr-51) is a (Z)-2,3-didehydrobutyrine. Thr-52 is modified (1-amino-2-propanone; alternate). Residue Thr-52 is modified to Decarboxylated threonine; alternate.

The protein belongs to the thiocillin family. In terms of processing, maturation of thiazole and oxazole containing antibiotics involves the enzymatic condensation of a Cys, Ser or Thr with the alpha-carbonyl of the preceding amino acid to form a thioether or ether bond, then dehydration to form a double bond with the alpha-amino nitrogen. Thiazoline or oxazoline ring are dehydrogenated to form thiazole or oxazole rings. Post-translationally, maturation of pyridinyl containing antibiotics involves the cross-linking of a Ser and a Cys-Ser pair usually separated by 7 or 8 residues along the peptide chain. The Ser residues are dehydrated to didehydroalanines, then bonded between their beta carbons. The alpha carbonyl of the Cys condenses with alpha carbon of the first Ser to form a pyridinyl ring. The ring may be multiply dehydrogenated to form a pyridine ring with loss of the amino nitrogen of the first Ser. The 8 possible modification isomers, differing in the presence of modifications at three positions, have been characterized in PubMed:19196969. Val-44 is modified to 3-hydroxyvaline in forms thiocillin I, thiocillin II, YM-266183, and YM-266184. Thr-46 is modified to O-methylthreonine in forms thiocillin II, thiocillin III, thiocillin IV, and YM-266184. Thr-52 is decarboxylated to (R)-1-aminopropan-2-ol in forms micrococcin P1, thiocillin I, thiocillin II, and thiocillin III. Thr-52 is decarboxylated and oxidized to 1-amino-2-propanone in forms micrococcin P2, YM-266183, YM-266184. and thiocillin IV. In terms of processing, the structure of 2,3-didehydrobutyrines is not discussed in PubMed:19196969. However, in Fig. 3 the residues are diagrammed as Z-isomers.

The protein resides in the secreted. Has bacteriocidal activity against Gram-positive bacteria, but not against Gram-negative bacteria. Inhibits bacterial protein biosynthesis by acting on the elongation factor Tu (EF-Tu). The protein is Thiocillin of Bacillus cereus (strain ATCC 14579 / DSM 31 / CCUG 7414 / JCM 2152 / NBRC 15305 / NCIMB 9373 / NCTC 2599 / NRRL B-3711).